Reading from the N-terminus, the 315-residue chain is Olfactory receptor 5P59 (315 aa).

Topologically, residues 1 to 28 are extracellular; sequence MAFLQDGNHTAVTEFILLGLTDDPVLRV. The N-linked (GlcNAc...) asparagine glycan is linked to Asn8. The helical transmembrane segment at 29-49 threads the bilayer; it reads VLFTIILCIYLVTVFGNLSTI. Topologically, residues 50-57 are cytoplasmic; that stretch reads LLIRVSSQ. A helical membrane pass occupies residues 58-78; that stretch reads LHHPMYFFLSHLASVDIGISS. The Extracellular segment spans residues 79–102; sequence SVTPSMLVNFLLERSTISYLGCGI. A disulfide bond links Cys100 and Cys193. A helical membrane pass occupies residues 103–123; sequence QLGSADFIASVECFLLAAMAY. At 124–136 the chain is on the cytoplasmic side; the sequence is DRFMAVCNPLLYS. A helical membrane pass occupies residues 137–157; it reads TKMSTQVCVQLVVGSYIGGFL. Residues 158–200 are Extracellular-facing; that stretch reads NASLIVTVYFFSFLFCGPNRIDHFFCDFAPLAELSCSDVSVSV. Residues 201-221 traverse the membrane as a helical segment; it reads LIISFSAGSVTMITVFVIVIS. Residues 222-241 lie on the Cytoplasmic side of the membrane; the sequence is YSYILITILKMHSTEGRHKA. The helical transmembrane segment at 242-262 threads the bilayer; sequence FSTCTSHLTAVTLYYGTITFI. At 263-275 the chain is on the extracellular side; the sequence is YVMPKSSFSTDQN. The chain crosses the membrane as a helical span at residues 276–296; sequence KVVSVFYMVMIPMLNPLIYSL. The Cytoplasmic segment spans residues 297 to 315; that stretch reads SNNEIKGALKRQLGMKTLS.

It belongs to the G-protein coupled receptor 1 family.

It is found in the cell membrane. In terms of biological role, potential odorant receptor. In Mus musculus (Mouse), this protein is Olfactory receptor 5P59.